The sequence spans 460 residues: Inactive ubiquitin carboxyl-terminal hydrolase MINDY-4B (460 aa).

The disordered stretch occupies residues 41–76 (TNNSTPQNHEGNHTSADENEDGTGLSQPKGQGHLPS).

The protein belongs to the MINDY deubiquitinase family. FAM188 subfamily.

The sequence is that of Inactive ubiquitin carboxyl-terminal hydrolase MINDY-4B from Homo sapiens (Human).